Here is a 365-residue protein sequence, read N- to C-terminus: Peptide chain release factor 2 (365 aa).

Glutamine 252 is subject to N5-methylglutamine.

This sequence belongs to the prokaryotic/mitochondrial release factor family. Post-translationally, methylated by PrmC. Methylation increases the termination efficiency of RF2.

It is found in the cytoplasm. Its function is as follows. Peptide chain release factor 2 directs the termination of translation in response to the peptide chain termination codons UGA and UAA. The protein is Peptide chain release factor 2 of Colwellia psychrerythraea (strain 34H / ATCC BAA-681) (Vibrio psychroerythus).